Here is a 106-residue protein sequence, read N- to C-terminus: MAVPSCQTDGVRALKFVDHVGGEELGDNVRGVVLIACTTISMSPWPVTGMAGLVGSRTVSTSGVRICGLTATGTVIAHQLHMTVAAVGFRRIGLAGDRARPIWRIS.

This is an uncharacterized protein from Sinorhizobium fredii (strain NBRC 101917 / NGR234).